The chain runs to 157 residues: Phosphopantetheine adenylyltransferase (157 aa).

Threonine 8 lines the substrate pocket. Residues 8-9 (TF) and histidine 16 contribute to the ATP site. The substrate site is built by lysine 40, threonine 72, and arginine 86. ATP-binding positions include 87-89 (GLR), glutamate 97, and 122-128 (YSFLSSS).

It belongs to the bacterial CoaD family. Homohexamer. Mg(2+) serves as cofactor.

The protein localises to the cytoplasm. It catalyses the reaction (R)-4'-phosphopantetheine + ATP + H(+) = 3'-dephospho-CoA + diphosphate. Its pathway is cofactor biosynthesis; coenzyme A biosynthesis; CoA from (R)-pantothenate: step 4/5. Reversibly transfers an adenylyl group from ATP to 4'-phosphopantetheine, yielding dephospho-CoA (dPCoA) and pyrophosphate. This is Phosphopantetheine adenylyltransferase from Prochlorococcus marinus (strain AS9601).